The sequence spans 161 residues: Endoribonuclease YbeY (161 aa).

Residues His120, His124, and Asp130 each contribute to the Zn(2+) site.

This sequence belongs to the endoribonuclease YbeY family. The cofactor is Zn(2+).

It localises to the cytoplasm. Single strand-specific metallo-endoribonuclease involved in late-stage 70S ribosome quality control and in maturation of the 3' terminus of the 16S rRNA. This is Endoribonuclease YbeY from Chlamydia trachomatis serovar L2 (strain ATCC VR-902B / DSM 19102 / 434/Bu).